A 336-amino-acid chain; its full sequence is MYYPFVRKALFQLDPERAHEFTFQQLRRITGTPLEALVRQKVPTKPVTCMGLTFKNPLGLAAGLDKDGECIDALGAMGFGSLEIGTVTPRPQPGNDKPRLFRLVDAEGLINRMGFNNLGVDNLVENVKKAHFDGILGINIGKNKDTPVENGKDDYLICMEKVYAYAGYIAINISSPNTPGLRTLQYGDALDDLLTAIKNKQNDLQAIHHKYVPVAVKIAPDLCEEELIQVADSLLRHNIDGVIATNTTLDRSLVQGMKNCQQTGGLSGRPLQLKSTEIIRRLSQELKGQLPIIGVGGIDSVIAAREKIAAGATLVQIYSGFIFKGPPLIEEIVTHI.

FMN is bound by residues 62–66 (AGLDK) and T86. K66 is a binding site for substrate. 111–115 (NRMGF) serves as a coordination point for substrate. FMN-binding residues include N139 and N172. N172 is a binding site for substrate. Residue S175 is the Nucleophile of the active site. N177 is a binding site for substrate. 2 residues coordinate FMN: K217 and T245. 246-247 (NT) is a binding site for substrate. FMN-binding positions include G268, G297, and 318–319 (YS).

The protein belongs to the dihydroorotate dehydrogenase family. Type 2 subfamily. As to quaternary structure, monomer. The cofactor is FMN.

The protein localises to the cell membrane. The enzyme catalyses (S)-dihydroorotate + a quinone = orotate + a quinol. The protein operates within pyrimidine metabolism; UMP biosynthesis via de novo pathway; orotate from (S)-dihydroorotate (quinone route): step 1/1. Catalyzes the conversion of dihydroorotate to orotate with quinone as electron acceptor. This is Dihydroorotate dehydrogenase (quinone) from Salmonella gallinarum (strain 287/91 / NCTC 13346).